We begin with the raw amino-acid sequence, 276 residues long: MGIKNLNSVTASLRGTVLLDKSMLWKGKPEKSLVSYKISCGGRNSRGVITVRHRGRGHKRLYRIIDFKRNKVGVSATVERLEYDPNRTAFIALLSYDDGEKSYIIAPNGLKKGDVVISGEGSDILPGNCLMLKSIPVGTFVHNVELRPGNGGVIARSAGTYAQLMSKDGVYVLLRLSSGEIRKVLSDCRATIGIVSNLDNQNVKLGKAGRNRWLGIRPTVRGVAMNPIDHPHGGGEGKTSGGRNPVTPWGVPTKGKKTRKRNKSSNKYIKRVSDKG.

The tract at residues 224 to 276 (AMNPIDHPHGGGEGKTSGGRNPVTPWGVPTKGKKTRKRNKSSNKYIKRVSDKG) is disordered. A compositionally biased stretch (basic residues) spans 254–270 (KGKKTRKRNKSSNKYIK).

Belongs to the universal ribosomal protein uL2 family. In terms of assembly, part of the 50S ribosomal subunit. Forms a bridge to the 30S subunit in the 70S ribosome.

Its function is as follows. One of the primary rRNA binding proteins. Required for association of the 30S and 50S subunits to form the 70S ribosome, for tRNA binding and peptide bond formation. It has been suggested to have peptidyltransferase activity; this is somewhat controversial. Makes several contacts with the 16S rRNA in the 70S ribosome. This is Large ribosomal subunit protein uL2 from Ehrlichia canis (strain Jake).